Consider the following 135-residue polypeptide: Large ribosomal subunit protein uL16c (135 aa).

This sequence belongs to the universal ribosomal protein uL16 family. As to quaternary structure, part of the 50S ribosomal subunit.

It localises to the plastid. The protein localises to the chloroplast. In Piper cenocladum (Ant piper), this protein is Large ribosomal subunit protein uL16c.